Consider the following 293-residue polypeptide: Probable porphobilinogen deaminase (293 aa).

Cys-233 carries the S-(dipyrrolylmethanemethyl)cysteine modification.

It belongs to the HMBS family. The cofactor is dipyrromethane.

It catalyses the reaction 4 porphobilinogen + H2O = hydroxymethylbilane + 4 NH4(+). It functions in the pathway porphyrin-containing compound metabolism; protoporphyrin-IX biosynthesis; coproporphyrinogen-III from 5-aminolevulinate: step 2/4. Its function is as follows. Tetrapolymerization of the monopyrrole PBG into the hydroxymethylbilane pre-uroporphyrinogen in several discrete steps. This is Probable porphobilinogen deaminase from Saccharolobus islandicus (strain Y.N.15.51 / Yellowstone #2) (Sulfolobus islandicus).